A 697-amino-acid chain; its full sequence is Zinc finger protein 12 (697 aa).

Lysine 3 is covalently cross-linked (Glycyl lysine isopeptide (Lys-Gly) (interchain with G-Cter in SUMO2)). The KRAB domain occupies 8-79; sequence VSFKDVAVDF…EGEFLLQSYP (72 aa). Residues lysine 98, lysine 179, lysine 182, lysine 209, lysine 215, lysine 224, lysine 239, and lysine 267 each participate in a glycyl lysine isopeptide (Lys-Gly) (interchain with G-Cter in SUMO2) cross-link. 2 C2H2-type zinc fingers span residues 269 to 291 and 297 to 319; these read YECSECGKSFCKKSKFIIHQRTH and YECNQCGKSFCQKGTLTVHQRTH. Residues lysine 309, lysine 323, lysine 337, and lysine 365 each participate in a glycyl lysine isopeptide (Lys-Gly) (interchain with G-Cter in SUMO2) cross-link. C2H2-type zinc fingers lie at residues 325–347, 353–375, 381–403, 409–431, 437–459, 465–487, 493–515, and 521–543; these read YECNECGKNFYQKLHLIQHQRTH, YECSYCGKSFCQKTHLTQHQRTH, YVCHDCGKTFSQKSALNDHQKIH, YKCSECGKCFCRKSTLTTHLRTH, YECNECGKFFSRLSYLTVHYRTH, YECNECGKTFYLNSALMRHQRVH, YECNECGKLFSQLSYLTIHHRTH, and YECSECGKTFYQNSALCRHRRIH. Glycyl lysine isopeptide (Lys-Gly) (interchain with G-Cter in SUMO2) cross-links involve residues lysine 544 and lysine 547. 5 C2H2-type zinc fingers span residues 549–571, 577–599, 605–627, 633–655, and 661–683; these read YECYICGKFFSQMSYLTIHHRIH, YECSECGKTFCQNSALNRHQRTH, YECYECGKCFSQMSYLTIHHRIH, FECNECGKAFSRMSYLTVHYRTH, and YECTECGKKFYHKSAFNSHQRIH.

This sequence belongs to the krueppel C2H2-type zinc-finger protein family. Widely expressed in various adult tissues and embryonic developmental stages (isoform 3).

It is found in the nucleus. Transcriptional repressor which suppresses activation protein 1 (AP-1)- and serum response element (SRE)-mediated transcriptional activity. The polypeptide is Zinc finger protein 12 (ZNF12) (Homo sapiens (Human)).